Consider the following 395-residue polypeptide: Small ribosomal subunit protein mS31 (395 aa).

Residues 1–65 constitute a mitochondrion transit peptide; that stretch reads MFPRVSTFLP…IQRYFGTNSV (65 aa). Disordered stretches follow at residues 70-97 and 175-196; these read KDKQ…NTKK and SELL…DAKR. A compositionally biased stretch (basic and acidic residues) spans 183–196; it reads QHEEESRAQRDAKR.

Belongs to the mitochondrion-specific ribosomal protein mS31 family. Component of the mitochondrial small ribosomal subunit (mt-SSU). Mature mammalian 55S mitochondrial ribosomes consist of a small (28S) and a large (39S) subunit. The 28S small subunit contains a 12S ribosomal RNA (12S mt-rRNA) and 30 different proteins. The 39S large subunit contains a 16S rRNA (16S mt-rRNA), a copy of mitochondrial valine transfer RNA (mt-tRNA(Val)), which plays an integral structural role, and 52 different proteins.

It is found in the mitochondrion. The sequence is that of Small ribosomal subunit protein mS31 (MRPS31) from Homo sapiens (Human).